The chain runs to 77 residues: Large ribosomal subunit protein bL28 (77 aa).

This sequence belongs to the bacterial ribosomal protein bL28 family.

This Paracidovorax citrulli (strain AAC00-1) (Acidovorax citrulli) protein is Large ribosomal subunit protein bL28.